Here is a 472-residue protein sequence, read N- to C-terminus: UDP-N-acetylmuramate--L-alanine ligase (472 aa).

G122–T128 serves as a coordination point for ATP.

This sequence belongs to the MurCDEF family.

The protein localises to the cytoplasm. The enzyme catalyses UDP-N-acetyl-alpha-D-muramate + L-alanine + ATP = UDP-N-acetyl-alpha-D-muramoyl-L-alanine + ADP + phosphate + H(+). It functions in the pathway cell wall biogenesis; peptidoglycan biosynthesis. Its function is as follows. Cell wall formation. The sequence is that of UDP-N-acetylmuramate--L-alanine ligase from Myxococcus xanthus (strain DK1622).